Here is a 230-residue protein sequence, read N- to C-terminus: Fibrillarin-like rRNA/tRNA 2'-O-methyltransferase (230 aa).

S-adenosyl-L-methionine contacts are provided by residues 87–88 (TT), 105–106 (EF), 130–131 (DA), and 150–153 (DVAQ).

Belongs to the methyltransferase superfamily. Fibrillarin family. As to quaternary structure, interacts with nop5. Component of box C/D small ribonucleoprotein (sRNP) particles that contain rpl7ae, FlpA and nop5, plus a guide RNA.

In terms of biological role, involved in pre-rRNA and tRNA processing. Utilizes the methyl donor S-adenosyl-L-methionine to catalyze the site-specific 2'-hydroxyl methylation of ribose moieties in rRNA and tRNA. Site specificity is provided by a guide RNA that base pairs with the substrate. Methylation occurs at a characteristic distance from the sequence involved in base pairing with the guide RNA. The chain is Fibrillarin-like rRNA/tRNA 2'-O-methyltransferase from Methanococcus maripaludis (strain C5 / ATCC BAA-1333).